We begin with the raw amino-acid sequence, 578 residues long: G protein-coupled receptor kinase 4 (578 aa).

Residue Met-1 is modified to N-acetylmethionine. The tract at residues 1–154 (MELENIVANS…ECTRVAHNYL (154 aa)) is N-terminal. Residues 52 to 172 (DYSSLCDKQP…QESSYFSQFL (121 aa)) enclose the RGS domain. A Protein kinase domain is found at 187–449 (FRHYRVLGKG…AAGVKQHPVF (263 aa)). Residues 193 to 201 (LGKGGFGEV) and Lys-216 each bind ATP. The Proton acceptor role is filled by Asp-312. The region spanning 450 to 515 (KDINFRRLEA…GCVSIPWQNE (66 aa)) is the AGC-kinase C-terminal domain. The residue at position 485 (Ser-485) is a Phosphoserine.

This sequence belongs to the protein kinase superfamily. AGC Ser/Thr protein kinase family. GPRK subfamily. In terms of assembly, interacts with DRD3. Post-translationally, palmitoylated. As to expression, isoform 1, isoform 2, isoform 3, and isoform 4 are expressed in testis. Isoform 4 is expressed in myometrium.

It is found in the cytoplasm. It localises to the cell cortex. It catalyses the reaction [G-protein-coupled receptor] + ATP = [G-protein-coupled receptor]-phosphate + ADP + H(+). Its activity is regulated as follows. Inhibited by heparin. Functionally, specifically phosphorylates the activated forms of G protein-coupled receptors. GRK4-alpha can phosphorylate rhodopsin and its activity is inhibited by calmodulin; the other three isoforms do not phosphorylate rhodopsin and do not interact with calmodulin. GRK4-alpha and GRK4-gamma phosphorylate DRD3. Phosphorylates ADRB2. This Homo sapiens (Human) protein is G protein-coupled receptor kinase 4 (GRK4).